We begin with the raw amino-acid sequence, 318 residues long: Type II restriction enzyme HaeIII (318 aa).

The enzyme catalyses Endonucleolytic cleavage of DNA to give specific double-stranded fragments with terminal 5'-phosphates.. Its function is as follows. A P subtype restriction enzyme that recognizes the double-stranded sequence 5'-GGCC-3' and cleaves after G-2. This chain is Type II restriction enzyme HaeIII (haeIIIR), found in Haemophilus aegyptius.